The following is a 115-amino-acid chain: uncharacterized protein (115 aa).

A signal peptide spans 1-24 (MLPLCLTFLSFFLSLGGSFKAVMT). 2 helical membrane passes run 39-59 (FWIF…ALAI) and 93-113 (YLTS…FLLS).

Its subcellular location is the membrane. This is an uncharacterized protein from Saccharomyces cerevisiae (strain ATCC 204508 / S288c) (Baker's yeast).